The following is a 793-amino-acid chain: Serine/threonine-protein phosphatase 1 regulatory subunit GAC1 (793 aa).

Residues 1–10 (MVIQTATTLS) show a composition bias toward polar residues. The tract at residues 1-20 (MVIQTATTLSPAKARPSFPH) is disordered. The 126-residue stretch at 235-360 (TKYLNGQNVK…NNNGKNYHLF (126 aa)) folds into the CBM21 domain. Phosphoserine is present on residues serine 415 and serine 424. Disordered stretches follow at residues 450 to 491 (LENA…SIDL) and 616 to 671 (TTMD…LNDH). The segment covering 623–633 (KTSTINNSTDT) has biased composition (polar residues). The segment covering 637–648 (PSKENGTVKENK) has biased composition (basic and acidic residues). Residues 649 to 665 (SSANSTSAPSSSQNRAS) are compositionally biased toward low complexity.

Its function is as follows. Regulates the activity of glycogen synthase. It is most probably a regulatory subunit for protein phosphatase type 1. The chain is Serine/threonine-protein phosphatase 1 regulatory subunit GAC1 (GAC1) from Saccharomyces cerevisiae (strain ATCC 204508 / S288c) (Baker's yeast).